Consider the following 69-residue polypeptide: Large ribosomal subunit protein uL30 (69 aa).

The protein belongs to the universal ribosomal protein uL30 family. As to quaternary structure, part of the 50S ribosomal subunit.

The sequence is that of Large ribosomal subunit protein uL30 from Rhizobium etli (strain ATCC 51251 / DSM 11541 / JCM 21823 / NBRC 15573 / CFN 42).